A 386-amino-acid polypeptide reads, in one-letter code: Probable protein phosphatase 2C 36 (386 aa).

The PPM-type phosphatase domain maps to 60–363 (ELSVAVVQGN…DDITVIVLFI (304 aa)). Positions 94, 95, 295, and 354 each coordinate Mn(2+).

It belongs to the PP2C family. Mg(2+) serves as cofactor. Requires Mn(2+) as cofactor.

The catalysed reaction is O-phospho-L-seryl-[protein] + H2O = L-seryl-[protein] + phosphate. It carries out the reaction O-phospho-L-threonyl-[protein] + H2O = L-threonyl-[protein] + phosphate. This chain is Probable protein phosphatase 2C 36, found in Oryza sativa subsp. japonica (Rice).